The following is a 142-amino-acid chain: Large ribosomal subunit protein uL11 (142 aa).

It belongs to the universal ribosomal protein uL11 family. In terms of assembly, part of the ribosomal stalk of the 50S ribosomal subunit. Interacts with L10 and the large rRNA to form the base of the stalk. L10 forms an elongated spine to which L12 dimers bind in a sequential fashion forming a multimeric L10(L12)X complex. In terms of processing, one or more lysine residues are methylated.

Functionally, forms part of the ribosomal stalk which helps the ribosome interact with GTP-bound translation factors. This is Large ribosomal subunit protein uL11 from Parvibaculum lavamentivorans (strain DS-1 / DSM 13023 / NCIMB 13966).